The sequence spans 375 residues: Paralyzed arrest at two-fold protein 6 (375 aa).

A disordered region spans residues Met1 to Glu51. Residues Pro10–Val20 are compositionally biased toward basic and acidic residues. Calponin-homology (CH) domains follow at residues Ala99–Arg206 and Ala266–Lys373.

This sequence belongs to the parvin family. As to quaternary structure, may interact (via calponin-homology (CH) 2 domain) with pat-4 (via kinase domain). May form a complex with unc-112 and pat-4. Component of an integrin containing attachment complex, composed of at least pat-2, pat-3, pat-4, pat-6, unc-52, unc-97 and unc-112. In terms of tissue distribution, expressed from 1.5 stage embryos, mostly within the muscle cells. In adult hermaphrodites, expressed in the attachments of other muscles, including the uterine, anal depressor, anal sphincter, and vulval muscles, as well as in the spermatheca and the distal tip cells. Expressed in mechanosensory receptor neurons ALML/R, PLML/R, AVM, and PVM. Localizes at body wall muscle attachments.

It localises to the cytoplasm. The protein resides in the cytoskeleton. The protein localises to the myofibril. Its subcellular location is the sarcomere. It is found in the m line. It localises to the perikaryon. The protein resides in the cell projection. The protein localises to the axon. Functionally, involved in the regulation of cell adhesion and cytoskeleton organization. Component of an integrin containing attachment complex, which is required for muscle development and maintenance. During embryonic development, required to recruit cpna-1, unc-89 and myofilaments to newly forming integrin attachments composed of integrins pat-2/pat-3, pat-4 and unc-112. Also required to reposition the integrin-based attachments so that they form the highly ordered array of dense body and M-line attachments that are characteristic of mature muscle cells. During the formation of neuromuscular junctions at the larval stage, negatively regulates membrane protrusion from body wall muscles. This chain is Paralyzed arrest at two-fold protein 6, found in Caenorhabditis elegans.